The following is a 132-amino-acid chain: Small ribosomal subunit protein uS8 (132 aa).

Belongs to the universal ribosomal protein uS8 family. As to quaternary structure, part of the 30S ribosomal subunit. Contacts proteins S5 and S12.

Functionally, one of the primary rRNA binding proteins, it binds directly to 16S rRNA central domain where it helps coordinate assembly of the platform of the 30S subunit. In Brevibacillus brevis (strain 47 / JCM 6285 / NBRC 100599), this protein is Small ribosomal subunit protein uS8.